Reading from the N-terminus, the 425-residue chain is COP9 signalosome complex subunit 1 (425 aa).

The PCI domain maps to 219-379 (ASSGVPPEIY…KSKALQTLEN (161 aa)).

Belongs to the CSN1 family. Component of the COP9 signalosome (CSN) complex.

It localises to the cytoplasm. It is found in the nucleus. Component of the COP9 signalosome (CSN) complex that acts as an regulator of the ubiquitin (Ubl) conjugation pathway by mediating the deneddylation of the cullin subunit of SCF-type E3 ubiquitin-protein ligase complexes. The CSN complex is involved in the regulation of the circadian clock through its control of the stability of the SCF(FWD-1) complex. The protein is COP9 signalosome complex subunit 1 (csn-1) of Neurospora crassa (strain ATCC 24698 / 74-OR23-1A / CBS 708.71 / DSM 1257 / FGSC 987).